Here is a 257-residue protein sequence, read N- to C-terminus: Acetylglutamate kinase (257 aa).

Residues 43-44 (GG), Arg-65, and Asn-157 each bind substrate. Residues 180–185 (DVSGIL) and 208–210 (IIT) contribute to the ATP site.

Belongs to the acetylglutamate kinase family. ArgB subfamily. In terms of assembly, homodimer.

It is found in the cytoplasm. The catalysed reaction is N-acetyl-L-glutamate + ATP = N-acetyl-L-glutamyl 5-phosphate + ADP. The protein operates within amino-acid biosynthesis; L-arginine biosynthesis; N(2)-acetyl-L-ornithine from L-glutamate: step 2/4. Functionally, catalyzes the ATP-dependent phosphorylation of N-acetyl-L-glutamate. This is Acetylglutamate kinase from Salmonella agona (strain SL483).